The primary structure comprises 316 residues: Type II restriction enzyme BsuBI (316 aa).

The protein belongs to the BsuBI/PstI type II restriction endonuclease family. Homodimer. The cofactor is Mg(2+).

It catalyses the reaction Endonucleolytic cleavage of DNA to give specific double-stranded fragments with terminal 5'-phosphates.. A P subtype restriction enzyme that recognizes the double-stranded sequence 5'-CTGCAG-3' and cleaves after A-5. This chain is Type II restriction enzyme BsuBI (hsdBR), found in Bacillus subtilis.